Reading from the N-terminus, the 381-residue chain is Alkanesulfonate monooxygenase (381 aa).

It belongs to the SsuD family. As to quaternary structure, homotetramer.

The catalysed reaction is an alkanesulfonate + FMNH2 + O2 = an aldehyde + FMN + sulfite + H2O + 2 H(+). Functionally, catalyzes the desulfonation of aliphatic sulfonates. This is Alkanesulfonate monooxygenase from Cronobacter sakazakii (strain ATCC BAA-894) (Enterobacter sakazakii).